We begin with the raw amino-acid sequence, 155 residues long: UPF0225 protein PC1_1977 (155 aa).

Belongs to the UPF0225 family.

The sequence is that of UPF0225 protein PC1_1977 from Pectobacterium carotovorum subsp. carotovorum (strain PC1).